A 341-amino-acid chain; its full sequence is Anthranilate phosphoribosyltransferase (341 aa).

5-phospho-alpha-D-ribose 1-diphosphate is bound by residues G80, 83 to 84, T88, 90 to 93, 108 to 116, and S120; these read GD, NIST, and KHGNRAMSS. G80 serves as a coordination point for anthranilate. Mg(2+) is bound at residue S92. N111 is a binding site for anthranilate. Anthranilate is bound at residue R166. The Mg(2+) site is built by D225 and E226.

The protein belongs to the anthranilate phosphoribosyltransferase family. Homodimer. The cofactor is Mg(2+).

It carries out the reaction N-(5-phospho-beta-D-ribosyl)anthranilate + diphosphate = 5-phospho-alpha-D-ribose 1-diphosphate + anthranilate. Its pathway is amino-acid biosynthesis; L-tryptophan biosynthesis; L-tryptophan from chorismate: step 2/5. In terms of biological role, catalyzes the transfer of the phosphoribosyl group of 5-phosphorylribose-1-pyrophosphate (PRPP) to anthranilate to yield N-(5'-phosphoribosyl)-anthranilate (PRA). The polypeptide is Anthranilate phosphoribosyltransferase (Roseiflexus sp. (strain RS-1)).